A 387-amino-acid chain; its full sequence is 8-amino-7-oxononanoate synthase (387 aa).

Residue R19 coordinates substrate. 106-107 (GY) contributes to the pyridoxal 5'-phosphate binding site. H131 contributes to the substrate binding site. Positions 177, 205, and 234 each coordinate pyridoxal 5'-phosphate. K237 is modified (N6-(pyridoxal phosphate)lysine). T351 contacts substrate.

Belongs to the class-II pyridoxal-phosphate-dependent aminotransferase family. BioF subfamily. Homodimer. It depends on pyridoxal 5'-phosphate as a cofactor.

The catalysed reaction is 6-carboxyhexanoyl-[ACP] + L-alanine + H(+) = (8S)-8-amino-7-oxononanoate + holo-[ACP] + CO2. The protein operates within cofactor biosynthesis; biotin biosynthesis. Its function is as follows. Catalyzes the decarboxylative condensation of pimeloyl-[acyl-carrier protein] and L-alanine to produce 8-amino-7-oxononanoate (AON), [acyl-carrier protein], and carbon dioxide. The chain is 8-amino-7-oxononanoate synthase from Methylococcus capsulatus (strain ATCC 33009 / NCIMB 11132 / Bath).